Consider the following 541-residue polypeptide: Formimidoyltransferase-cyclodeaminase (541 aa).

A formiminotransferase N-subdomain region spans residues methionine 1–phenylalanine 181. Histidine 82 functions as the For formimidoyltransferase activity in the catalytic mechanism. Position 163-172 (glycine 163–glycine 172) interacts with folate. The tract at residues leucine 182–valine 326 is formiminotransferase C-subdomain. The segment at proline 327 to serine 334 is linker. Positions leucine 335–alanine 541 are cyclodeaminase/cyclohydrolase. Aspartate 412 (for cyclodeaminase activity) is an active-site residue. Serine 520 carries the post-translational modification Phosphoserine.

In the C-terminal section; belongs to the cyclodeaminase/cyclohydrolase family. This sequence in the N-terminal section; belongs to the formiminotransferase family. As to quaternary structure, homooctamer, including four polyglutamate binding sites. The subunits are arranged as a tetramer of dimers, and form a planar ring-shaped structure.

It is found in the cytoplasm. Its subcellular location is the cytosol. It localises to the golgi apparatus. The protein localises to the cytoskeleton. The protein resides in the microtubule organizing center. It is found in the centrosome. Its subcellular location is the centriole. It carries out the reaction 5-formimidoyltetrahydrofolate + L-glutamate = N-formimidoyl-L-glutamate + (6S)-5,6,7,8-tetrahydrofolate. It catalyses the reaction 5-formimidoyltetrahydrofolate + 2 H(+) = (6R)-5,10-methenyltetrahydrofolate + NH4(+). It participates in amino-acid degradation; L-histidine degradation into L-glutamate; L-glutamate from N-formimidoyl-L-glutamate (transferase route): step 1/1. Its function is as follows. Folate-dependent enzyme, that displays both transferase and deaminase activity. Serves to channel one-carbon units from formiminoglutamate to the folate pool. Binds and promotes bundling of vimentin filaments originating from the Golgi. The sequence is that of Formimidoyltransferase-cyclodeaminase (FTCD) from Sus scrofa (Pig).